The primary structure comprises 92 residues: Small ribosomal subunit protein uS19 (92 aa).

Belongs to the universal ribosomal protein uS19 family.

Its function is as follows. Protein S19 forms a complex with S13 that binds strongly to the 16S ribosomal RNA. This chain is Small ribosomal subunit protein uS19, found in Streptococcus pyogenes serotype M49 (strain NZ131).